A 91-amino-acid chain; its full sequence is Large ribosomal subunit protein uL22 (91 aa).

The protein belongs to the universal ribosomal protein uL22 family. Part of the 50S ribosomal subunit.

This protein binds specifically to 23S rRNA; its binding is stimulated by other ribosomal proteins, e.g. L4, L17, and L20. It is important during the early stages of 50S assembly. It makes multiple contacts with different domains of the 23S rRNA in the assembled 50S subunit and ribosome. Its function is as follows. The globular domain of the protein is located near the polypeptide exit tunnel on the outside of the subunit, while an extended beta-hairpin is found that lines the wall of the exit tunnel in the center of the 70S ribosome. This is Large ribosomal subunit protein uL22 (rplV) from Ash yellows phytoplasma.